The sequence spans 80 residues: MARTLEPLAKKIFKGVLVAELVGVFGAYFLFSKMHTSQDFRQTMSKKYPFILEVYYKSTEKSGMYGIRELDQKTWLNSKN.

The chain crosses the membrane as a helical span at residues 15 to 32 (GVLVAELVGVFGAYFLFS).

Its subcellular location is the mitochondrion membrane. In Homo sapiens (Human), this protein is Protein CEBPZOS.